Reading from the N-terminus, the 330-residue chain is ADP-L-glycero-D-manno-heptose-6-epimerase (330 aa).

NADP(+) is bound by residues 11-12, 32-33, K39, K54, 75-79, and N92; these read FI, DN, and EGACS. Y139 functions as the Proton acceptor in the catalytic mechanism. Residue K143 coordinates NADP(+). N168 contacts substrate. NADP(+) contacts are provided by V169 and K177. K177 serves as the catalytic Proton acceptor. Substrate is bound by residues R179, H186, 200–203, R213, and Y292; that span reads FGEY.

The protein belongs to the NAD(P)-dependent epimerase/dehydratase family. HldD subfamily. In terms of assembly, homopentamer. Requires NADP(+) as cofactor.

The catalysed reaction is ADP-D-glycero-beta-D-manno-heptose = ADP-L-glycero-beta-D-manno-heptose. The protein operates within nucleotide-sugar biosynthesis; ADP-L-glycero-beta-D-manno-heptose biosynthesis; ADP-L-glycero-beta-D-manno-heptose from D-glycero-beta-D-manno-heptose 7-phosphate: step 4/4. In terms of biological role, catalyzes the interconversion between ADP-D-glycero-beta-D-manno-heptose and ADP-L-glycero-beta-D-manno-heptose via an epimerization at carbon 6 of the heptose. In Paraburkholderia phytofirmans (strain DSM 17436 / LMG 22146 / PsJN) (Burkholderia phytofirmans), this protein is ADP-L-glycero-D-manno-heptose-6-epimerase.